The chain runs to 207 residues: Uracil phosphoribosyltransferase (207 aa).

Residues Arg-77, Arg-102, and 129–137 (DPMVATGGS) contribute to the 5-phospho-alpha-D-ribose 1-diphosphate site. Uracil-binding positions include Ile-192 and 197-199 (GDA). 5-phospho-alpha-D-ribose 1-diphosphate is bound at residue Asp-198.

Belongs to the UPRTase family. Mg(2+) is required as a cofactor.

The enzyme catalyses UMP + diphosphate = 5-phospho-alpha-D-ribose 1-diphosphate + uracil. It functions in the pathway pyrimidine metabolism; UMP biosynthesis via salvage pathway; UMP from uracil: step 1/1. Allosterically activated by GTP. Its function is as follows. Catalyzes the conversion of uracil and 5-phospho-alpha-D-ribose 1-diphosphate (PRPP) to UMP and diphosphate. This is Uracil phosphoribosyltransferase from Mycobacterium bovis (strain ATCC BAA-935 / AF2122/97).